The following is a 597-amino-acid chain: Elongation factor 4 (597 aa).

A tr-type G domain is found at 2–184 (DHIRNFSIIA…ALIAKVPPPK (183 aa)). Residues 14-19 (DHGKST) and 131-134 (NKID) contribute to the GTP site.

This sequence belongs to the TRAFAC class translation factor GTPase superfamily. Classic translation factor GTPase family. LepA subfamily.

The protein resides in the cell inner membrane. It carries out the reaction GTP + H2O = GDP + phosphate + H(+). Its function is as follows. Required for accurate and efficient protein synthesis under certain stress conditions. May act as a fidelity factor of the translation reaction, by catalyzing a one-codon backward translocation of tRNAs on improperly translocated ribosomes. Back-translocation proceeds from a post-translocation (POST) complex to a pre-translocation (PRE) complex, thus giving elongation factor G a second chance to translocate the tRNAs correctly. Binds to ribosomes in a GTP-dependent manner. This is Elongation factor 4 from Burkholderia multivorans (strain ATCC 17616 / 249).